Reading from the N-terminus, the 66-residue chain is Large ribosomal subunit protein bL33c (66 aa).

It belongs to the bacterial ribosomal protein bL33 family.

The protein resides in the plastid. It localises to the chloroplast. The protein is Large ribosomal subunit protein bL33c of Phalaenopsis aphrodite subsp. formosana (Moth orchid).